The following is a 124-amino-acid chain: Protein MGF 110-4L-B (124 aa).

The first 18 residues, 1–18, serve as a signal peptide directing secretion; sequence MLVIFLGILGLLANQVLG. Asn-64 carries an N-linked (GlcNAc...) asparagine; by host glycan. The Prevents secretion from ER signature appears at 121-124; sequence KEDL.

It belongs to the asfivirus MGF 110 family.

It is found in the virion. It localises to the host endoplasmic reticulum-Golgi intermediate compartment. Functionally, causes the redistribution of lumenal ER protein to an enlarged ERGIC compartment. The polypeptide is Protein MGF 110-4L-B (African swine fever virus (isolate Portugal/Lis 57/1957) (ASFV)).